The primary structure comprises 235 residues: MOB kinase activator 2 (235 aa).

A disordered region spans residues 1-22 (MDWLMGKSKAKPNGKKPAAEEK). Residues cysteine 78, cysteine 83, histidine 157, and histidine 162 each coordinate Zn(2+). Positions 213–235 (NSGATGDGANSGASGAQNHVKER) are disordered.

It belongs to the MOB1/phocein family. As to quaternary structure, binds STK38 and STK38L. Post-translationally, phosphorylated.

It localises to the nucleus. It is found in the cytoplasm. The protein localises to the perinuclear region. Functionally, stimulates the autophosphorylation and kinase activity of STK38 and STK38L. This chain is MOB kinase activator 2 (Mob2), found in Mus musculus (Mouse).